Reading from the N-terminus, the 298-residue chain is 4-hydroxy-tetrahydrodipicolinate synthase (298 aa).

Residue Thr-48 coordinates pyruvate. Tyr-137 acts as the Proton donor/acceptor in catalysis. The active-site Schiff-base intermediate with substrate is the Lys-166. Ile-207 provides a ligand contact to pyruvate.

This sequence belongs to the DapA family. Homotetramer; dimer of dimers.

Its subcellular location is the cytoplasm. It catalyses the reaction L-aspartate 4-semialdehyde + pyruvate = (2S,4S)-4-hydroxy-2,3,4,5-tetrahydrodipicolinate + H2O + H(+). Its pathway is amino-acid biosynthesis; L-lysine biosynthesis via DAP pathway; (S)-tetrahydrodipicolinate from L-aspartate: step 3/4. Functionally, catalyzes the condensation of (S)-aspartate-beta-semialdehyde [(S)-ASA] and pyruvate to 4-hydroxy-tetrahydrodipicolinate (HTPA). The sequence is that of 4-hydroxy-tetrahydrodipicolinate synthase from Campylobacter lari (strain RM2100 / D67 / ATCC BAA-1060).